Reading from the N-terminus, the 427-residue chain is Succinate--CoA ligase [ADP-forming] subunit beta, mitochondrial (427 aa).

The transit peptide at 1–30 (MYSRKSLSLISKCGQLSRLNAQAALQARRH) directs the protein to the mitochondrion. The ATP-grasp domain maps to 39–284 (AQLLREYGIG…LSQEDPDEVK (246 aa)). Residues Lys-76 and 83–85 (GRG) contribute to the ATP site. Ser-102 carries the phosphoserine modification. Residue Glu-144 coordinates ATP. Residues Asn-236 and Asp-253 each coordinate Mg(2+). Phosphoserine is present on residues Ser-263 and Ser-276. Residues Asn-304 and 361 to 363 (GIV) each bind substrate.

This sequence belongs to the succinate/malate CoA ligase beta subunit family. As to quaternary structure, heterodimer of an alpha and a beta subunit. Requires Mg(2+) as cofactor.

The protein localises to the mitochondrion. The catalysed reaction is succinate + ATP + CoA = succinyl-CoA + ADP + phosphate. Its pathway is carbohydrate metabolism; tricarboxylic acid cycle; succinate from succinyl-CoA (ligase route): step 1/1. Succinyl-CoA synthetase functions in the citric acid cycle (TCA), coupling the hydrolysis of succinyl-CoA to the synthesis of ATP and thus represents the only step of substrate-level phosphorylation in the TCA. The beta subunit provides nucleotide specificity of the enzyme and binds the substrate succinate, while the binding sites for coenzyme A and phosphate are found in the alpha subunit. The protein is Succinate--CoA ligase [ADP-forming] subunit beta, mitochondrial of Saccharomyces cerevisiae (strain ATCC 204508 / S288c) (Baker's yeast).